The chain runs to 187 residues: MPVKEQGFSLLEVLIAMAISSVLLLGAARFLPALQRESLTSTRKLALEDEIWLRVFTVAKHLQRAGYCHGICTGEGLEIVGQGDCVIVQWDANSNGIWDREPVKESDQIGFRLKEHVLETLRGATSCEGKGWDKVTNPDAIIIDTFQVVRQDVSGFSPVLTVNMRAASKSEPQTVVNASYSVTGFNL.

A propeptide spans 1 to 7 (leader sequence); that stretch reads MPVKEQG. Position 8 is an N-methylphenylalanine (F8). A helical transmembrane segment spans residues 8-28; sequence FSLLEVLIAMAISSVLLLGAA.

The protein resides in the membrane. Functionally, not yet known. The polypeptide is Prepilin peptidase-dependent protein B (ppdB) (Escherichia coli (strain K12)).